The sequence spans 55 residues: Large ribosomal subunit protein bL33 (55 aa).

The protein belongs to the bacterial ribosomal protein bL33 family.

In Aliivibrio fischeri (strain ATCC 700601 / ES114) (Vibrio fischeri), this protein is Large ribosomal subunit protein bL33.